The chain runs to 283 residues: Nucleoid occlusion protein (283 aa).

Positions 1-21 (MKHSFSRFFGFGEKEEEPEIA) are disordered. The segment at residues 148 to 167 (EALAQRLGKGQSTIANKLRL) is a DNA-binding region (H-T-H motif).

It belongs to the ParB family.

The protein localises to the cytoplasm. The protein resides in the nucleoid. Functionally, effects nucleoid occlusion by binding relatively nonspecifically to DNA and preventing the assembly of the division machinery in the vicinity of the nucleoid, especially under conditions that disturb the cell cycle. It helps to coordinate cell division and chromosome segregation by preventing the formation of the Z ring through the nucleoid, which would cause chromosome breakage. The sequence is that of Nucleoid occlusion protein from Bacillus velezensis (strain DSM 23117 / BGSC 10A6 / LMG 26770 / FZB42) (Bacillus amyloliquefaciens subsp. plantarum).